The sequence spans 393 residues: tRNA(Met) cytidine acetate ligase (393 aa).

ATP is bound by residues G81, N142, and R167.

The protein belongs to the TmcAL family.

Its subcellular location is the cytoplasm. The enzyme catalyses cytidine(34) in elongator tRNA(Met) + acetate + ATP = N(4)-acetylcytidine(34) in elongator tRNA(Met) + AMP + diphosphate. In terms of biological role, catalyzes the formation of N(4)-acetylcytidine (ac(4)C) at the wobble position of elongator tRNA(Met), using acetate and ATP as substrates. First activates an acetate ion to form acetyladenylate (Ac-AMP) and then transfers the acetyl group to tRNA to form ac(4)C34. In Bacillus cereus (strain AH820), this protein is tRNA(Met) cytidine acetate ligase.